The sequence spans 310 residues: MKTLIRKFSRTAITVVLVILAFIAIFNAWVYYTESPWTRDARFSADVVAIAPDVSGLITQVNVHDNQLVKKGQVLFTIDQPRYQKALEEAQADVAYYQVLAQEKRQEAGRRNRLGVQAMSREEIDQANNVLQTVLHQLAKAQATRDLAKLDLERTVIRAPVDGWVTNLNVYTGEFITRGSTAVALVKQNSFYVLAYMEETKLEGVRPGYRAEITPLGSNKVLKGTVDSVAAGVTNASSTRDDKGMATIDSNLEWVRLAQRVPVRIRLDNQQENIWPAGTTATVVVTGKQDRDESQDSFFRKMAHRLREFG.

A helical transmembrane segment spans residues 12-32 (AITVVLVILAFIAIFNAWVYY).

This sequence belongs to the membrane fusion protein (MFP) (TC 8.A.1) family.

The protein resides in the cell inner membrane. In terms of biological role, forms an efflux pump with AaeB. In Escherichia coli O9:H4 (strain HS), this protein is p-hydroxybenzoic acid efflux pump subunit AaeA.